The sequence spans 208 residues: Putative dioxygenase RBE_0329 (208 aa).

Belongs to the intradiol ring-cleavage dioxygenase family.

The protein is Putative dioxygenase RBE_0329 of Rickettsia bellii (strain RML369-C).